Consider the following 498-residue polypeptide: ATP synthase subunit beta, chloroplastic (498 aa).

ATP is bound at residue Gly-172–Thr-179.

The protein belongs to the ATPase alpha/beta chains family. As to quaternary structure, F-type ATPases have 2 components, CF(1) - the catalytic core - and CF(0) - the membrane proton channel. CF(1) has five subunits: alpha(3), beta(3), gamma(1), delta(1), epsilon(1). CF(0) has four main subunits: a(1), b(1), b'(1) and c(9-12).

It is found in the plastid. The protein resides in the chloroplast thylakoid membrane. The catalysed reaction is ATP + H2O + 4 H(+)(in) = ADP + phosphate + 5 H(+)(out). Its function is as follows. Produces ATP from ADP in the presence of a proton gradient across the membrane. The catalytic sites are hosted primarily by the beta subunits. The protein is ATP synthase subunit beta, chloroplastic of Nicotiana rustica (Aztec tobacco).